Here is a 356-residue protein sequence, read N- to C-terminus: Guanine nucleotide-binding protein alpha-17 subunit (356 aa).

G2 carries the N-myristoyl glycine lipid modification. C4 is lipidated: S-palmitoyl cysteine. Residues 32 to 356 enclose the G-alpha domain; that stretch reads SIVKLLLLGA…QKNLQKAGMM (325 aa). The G1 motif stretch occupies residues 35–48; the sequence is KLLLLGAGECGKST. GTP-binding positions include 40–47, 177–183, 202–206, 271–274, and A328; these read GAGECGKS, LYSRVAT, DVGGQ, and NKKD. Residues S47 and T183 each contribute to the Mg(2+) site. The tract at residues 175–183 is G2 motif; sequence DILYSRVAT. The interval 198 to 207 is G3 motif; the sequence is FRVFDVGGQR. The tract at residues 267 to 274 is G4 motif; the sequence is ILFMNKKD. Residues 326 to 331 form a G5 motif region; it reads TCATDT.

Belongs to the G-alpha family. In terms of assembly, g proteins are composed of 3 units; alpha, beta and gamma. The alpha chain contains the guanine nucleotide binding site.

The protein resides in the cell projection. The protein localises to the cilium. It localises to the dendrite. In terms of biological role, guanine nucleotide-binding proteins (G proteins) are involved as modulators or transducers in various transmembrane signaling systems. This specific G-alpha subunit plays an important role in olfaction and in cilia morphogenesis. Involved in chemotactic responses to attractants diacetyl, pyrazine, 2,4,5-trimethylthiazole, benzaldehyde, isoamyl alcohol, butanone and 2,3-pentanedione. Displays a redundant function with gpa-3 in chemotactic responses. Involved in avoidance responses to copper, sodium dodecyl sulfate and linoleic acid. Involved in osmotic avoidance and mechanosensory responses. Involved in specifying fan-like morphology of cilia of head sensory neurons AWC. This Caenorhabditis briggsae protein is Guanine nucleotide-binding protein alpha-17 subunit (odr-3).